The following is a 118-amino-acid chain: MARIAGVNIPNHQHAVIALTAIYGIGRTTSGKICEAAGIAQTSKIKDLSEAEMERLREGVSKFTVEGDLRREVTMNIKRLMDLGCYRGFRHRKGLPVRGQRTRTNARTRKGPRKAIKK.

A disordered region spans residues 94–118 (GLPVRGQRTRTNARTRKGPRKAIKK).

The protein belongs to the universal ribosomal protein uS13 family. As to quaternary structure, part of the 30S ribosomal subunit. Forms a loose heterodimer with protein S19. Forms two bridges to the 50S subunit in the 70S ribosome.

Located at the top of the head of the 30S subunit, it contacts several helices of the 16S rRNA. In the 70S ribosome it contacts the 23S rRNA (bridge B1a) and protein L5 of the 50S subunit (bridge B1b), connecting the 2 subunits; these bridges are implicated in subunit movement. Contacts the tRNAs in the A and P-sites. The sequence is that of Small ribosomal subunit protein uS13 from Thiobacillus denitrificans (strain ATCC 25259 / T1).